We begin with the raw amino-acid sequence, 310 residues long: Aspartate carbamoyltransferase catalytic subunit (310 aa).

Carbamoyl phosphate is bound by residues arginine 58 and threonine 59. Lysine 86 contributes to the L-aspartate binding site. 3 residues coordinate carbamoyl phosphate: arginine 108, histidine 136, and glutamine 139. Residues arginine 169 and arginine 222 each coordinate L-aspartate. Residues glycine 264 and proline 265 each coordinate carbamoyl phosphate.

The protein belongs to the aspartate/ornithine carbamoyltransferase superfamily. ATCase family. Heterododecamer (2C3:3R2) of six catalytic PyrB chains organized as two trimers (C3), and six regulatory PyrI chains organized as three dimers (R2).

It carries out the reaction carbamoyl phosphate + L-aspartate = N-carbamoyl-L-aspartate + phosphate + H(+). It functions in the pathway pyrimidine metabolism; UMP biosynthesis via de novo pathway; (S)-dihydroorotate from bicarbonate: step 2/3. Its function is as follows. Catalyzes the condensation of carbamoyl phosphate and aspartate to form carbamoyl aspartate and inorganic phosphate, the committed step in the de novo pyrimidine nucleotide biosynthesis pathway. The chain is Aspartate carbamoyltransferase catalytic subunit from Campylobacter fetus subsp. fetus (strain 82-40).